Consider the following 204-residue polypeptide: Leucyl/phenylalanyl-tRNA--protein transferase (204 aa).

It belongs to the L/F-transferase family.

The protein localises to the cytoplasm. It catalyses the reaction N-terminal L-lysyl-[protein] + L-leucyl-tRNA(Leu) = N-terminal L-leucyl-L-lysyl-[protein] + tRNA(Leu) + H(+). The enzyme catalyses N-terminal L-arginyl-[protein] + L-leucyl-tRNA(Leu) = N-terminal L-leucyl-L-arginyl-[protein] + tRNA(Leu) + H(+). The catalysed reaction is L-phenylalanyl-tRNA(Phe) + an N-terminal L-alpha-aminoacyl-[protein] = an N-terminal L-phenylalanyl-L-alpha-aminoacyl-[protein] + tRNA(Phe). Functions in the N-end rule pathway of protein degradation where it conjugates Leu, Phe and, less efficiently, Met from aminoacyl-tRNAs to the N-termini of proteins containing an N-terminal arginine or lysine. The chain is Leucyl/phenylalanyl-tRNA--protein transferase from Brucella abortus (strain 2308).